We begin with the raw amino-acid sequence, 357 residues long: UDP-N-acetylglucosamine--N-acetylmuramyl-(pentapeptide) pyrophosphoryl-undecaprenol N-acetylglucosamine transferase (357 aa).

Residues 13 to 15 (TGG), Asn-125, Arg-161, Ser-189, Ile-243, and Gln-288 each bind UDP-N-acetyl-alpha-D-glucosamine.

This sequence belongs to the glycosyltransferase 28 family. MurG subfamily.

It localises to the cell inner membrane. The catalysed reaction is di-trans,octa-cis-undecaprenyl diphospho-N-acetyl-alpha-D-muramoyl-L-alanyl-D-glutamyl-meso-2,6-diaminopimeloyl-D-alanyl-D-alanine + UDP-N-acetyl-alpha-D-glucosamine = di-trans,octa-cis-undecaprenyl diphospho-[N-acetyl-alpha-D-glucosaminyl-(1-&gt;4)]-N-acetyl-alpha-D-muramoyl-L-alanyl-D-glutamyl-meso-2,6-diaminopimeloyl-D-alanyl-D-alanine + UDP + H(+). It functions in the pathway cell wall biogenesis; peptidoglycan biosynthesis. Cell wall formation. Catalyzes the transfer of a GlcNAc subunit on undecaprenyl-pyrophosphoryl-MurNAc-pentapeptide (lipid intermediate I) to form undecaprenyl-pyrophosphoryl-MurNAc-(pentapeptide)GlcNAc (lipid intermediate II). This chain is UDP-N-acetylglucosamine--N-acetylmuramyl-(pentapeptide) pyrophosphoryl-undecaprenol N-acetylglucosamine transferase, found in Bordetella parapertussis (strain 12822 / ATCC BAA-587 / NCTC 13253).